The primary structure comprises 927 residues: Perchlorate reductase subunit alpha (927 aa).

Residues 1–31 (MVQMTRRGFLLASGATLLGSSLSFRTLAAAA) constitute a signal peptide (tat-type signal). Residues 53–116 (DKKTRGAHLI…CAHDYMYGPH (64 aa)) enclose the 4Fe-4S Mo/W bis-MGD-type domain. Residues histidine 60, cysteine 64, cysteine 68, and cysteine 102 each contribute to the [4Fe-4S] cluster site. Aspartate 198 is a Mo-bis(molybdopterin guanine dinucleotide) binding site.

This sequence belongs to the prokaryotic molybdopterin-containing oxidoreductase family. Heterotrimer of alpha, beta and gamma subunits. [4Fe-4S] cluster serves as cofactor. Mo-bis(molybdopterin guanine dinucleotide) is required as a cofactor. Post-translationally, predicted to be exported by the Tat system. The position of the signal peptide cleavage has not been experimentally proven.

The protein localises to the periplasm. In terms of biological role, component of the perchlorate reductase that catalyzes the reduction of perchlorate to chlorite and allows anaerobic growth on perchlorate as the sole electron acceptor. Is probably also able to reduce chlorate to chlorite. The alpha subunit is likely the catalytic subunit. The protein is Perchlorate reductase subunit alpha (pcrA) of Dechloromonas aromatica (strain RCB).